The primary structure comprises 320 residues: ATP-dependent 6-phosphofructokinase (320 aa).

G12 is a binding site for ATP. ADP is bound by residues 22–26 (RGVVR) and 55–60 (RYSVSD). ATP-binding positions include 73–74 (RF) and 103–106 (GDGS). D104 contributes to the Mg(2+) binding site. Residue 126–128 (TID) coordinates substrate. The active-site Proton acceptor is D128. ADP is bound at residue R155. Substrate-binding positions include R163 and 170–172 (MGR). ADP contacts are provided by residues 186–188 (GCE), K212, and 214–216 (KKH). Substrate contacts are provided by residues E223, R244, and 250-253 (HIQR).

The protein belongs to the phosphofructokinase type A (PFKA) family. ATP-dependent PFK group I subfamily. Prokaryotic clade 'B1' sub-subfamily. Homotetramer. Requires Mg(2+) as cofactor.

It localises to the cytoplasm. The enzyme catalyses beta-D-fructose 6-phosphate + ATP = beta-D-fructose 1,6-bisphosphate + ADP + H(+). The protein operates within carbohydrate degradation; glycolysis; D-glyceraldehyde 3-phosphate and glycerone phosphate from D-glucose: step 3/4. With respect to regulation, allosterically activated by ADP and other diphosphonucleosides, and allosterically inhibited by phosphoenolpyruvate. Its function is as follows. Catalyzes the phosphorylation of D-fructose 6-phosphate to fructose 1,6-bisphosphate by ATP, the first committing step of glycolysis. The protein is ATP-dependent 6-phosphofructokinase of Serratia proteamaculans (strain 568).